An 811-amino-acid chain; its full sequence is E3 ubiquitin-protein ligase RNF10 (811 aa).

Over residues 1–10 the composition is skewed to polar residues; it reads MPLSSPNAAA. A disordered region spans residues 1-119; it reads MPLSSPNAAA…SFNGGRRDEV (119 aa). Ser-5 carries the post-translational modification Phosphoserine. Low complexity-rich tracts occupy residues 18-31, 78-90, and 104-113; these read NSGSNSSSASSGSS, NNQSRRSSSQKSK, and SKLFSSSFNG. The interaction with MEOX2 stretch occupies residues 101–185; that stretch reads GGSSKLFSSS…FNKELFLQAN (85 aa). A phosphoserine mark is found at Ser-110 and Ser-128. The RING-type zinc finger occupies 225–267; sequence CPICLYPPTAAKITRCGHIFCWACILHYLSLSEKTWSKCPICY. Residues 653 to 662 show a composition bias toward polar residues; the sequence is DSALGPTSTE. 3 disordered regions span residues 653–672, 724–761, and 776–811; these read DSALGPTSTEGHGALSISPL, DVWPKTAPKKDENSLVPPAPVDSDGESDNSDRVPVPSF, and LDTPATSDPLSEEKGGKKRKKQKQKLLFSTSVVHTK. Residues 724 to 736 are compositionally biased toward basic and acidic residues; it reads DVWPKTAPKKDEN. The segment covering 802-811 has biased composition (polar residues); that stretch reads LFSTSVVHTK.

It belongs to the RNF10 family. As to quaternary structure, interacts with MEOX2.

Its subcellular location is the cytoplasm. It localises to the nucleus. The catalysed reaction is S-ubiquitinyl-[E2 ubiquitin-conjugating enzyme]-L-cysteine + [acceptor protein]-L-lysine = [E2 ubiquitin-conjugating enzyme]-L-cysteine + N(6)-ubiquitinyl-[acceptor protein]-L-lysine.. The protein operates within protein modification; protein ubiquitination. Its function is as follows. E3 ubiquitin-protein ligase that catalyzes monoubiquitination of 40S ribosomal proteins RPS2/us5 and RPS3/us3 in response to ribosome stalling. Part of a ribosome quality control that takes place when ribosomes have stalled during translation initiation (iRQC): RNF10 acts by mediating monoubiquitination of RPS2/us5 and RPS3/us3, promoting their degradation by the proteasome. Also promotes ubiquitination of 40S ribosomal proteins in response to ribosome stalling during translation elongation. The action of RNF10 in iRQC is counteracted by USP10. May also act as a transcriptional factor involved in the regulation of MAG (Myelin-associated glycoprotein) expression. Acts as a regulator of Schwann cell differentiation and myelination. In Homo sapiens (Human), this protein is E3 ubiquitin-protein ligase RNF10.